The sequence spans 1170 residues: RNA-binding protein 33 (1170 aa).

Disordered stretches follow at residues 1–152 and 199–221; these read MAAA…EGHE and KDIK…LRFK. Residue alanine 2 is modified to N-acetylalanine. The segment covering 20-36 has biased composition (basic and acidic residues); the sequence is QFDKPGAERSWRRRAAD. Acidic residues predominate over residues 37-49; it reads EDWDSELEDDLLG. Residue serine 41 is modified to Phosphoserine. Polar residues predominate over residues 82–108; that stretch reads FSSQGVTISLNATSGMVTSFELSDNTN. Composition is skewed to acidic residues over residues 112 to 126 and 203 to 214; these read GEQE…GEDE and EESDEEEEDDEE. Phosphoserine occurs at positions 205 and 233. Disordered regions lie at residues 259–708, 721–784, 833–863, and 942–1050; these read FEER…NSNL, MSSS…PDED, QLYA…PFPG, and AVPQ…VPPG. The span at 267 to 278 shows a compositional bias: basic residues; the sequence is KQGRYSSRRGGR. Residues 289–306 are compositionally biased toward basic and acidic residues; sequence GDQRRESTERGRMKDHRP. Over residues 311–329 the composition is skewed to pro residues; sequence TQPPVVPQAPPPPPPPPQQ. Low complexity-rich tracts occupy residues 335 to 348, 357 to 372, and 394 to 403; these read LFQP…LPVQ, QGMH…RMMM, and TVVTPVQVPL. The span at 419 to 433 shows a compositional bias: pro residues; sequence FPGPPEFPQHTPGPV. Residue arginine 470 is modified to Asymmetric dimethylarginine. Pro residues-rich tracts occupy residues 481 to 490, 554 to 568, and 582 to 630; these read SPPPPPPPPT, FIPP…PGQP, and LHPP…PQHP. Residues 632–642 show a composition bias toward basic residues; it reads QHQHHHHHHHL. 2 stretches are compositionally biased toward polar residues: residues 662–708 and 721–732; these read QTAQ…NSNL and MSSSRCSATPSA. 2 positions are modified to phosphoserine: serine 741 and serine 765. The stretch at 789–835 forms a coiled coil; it reads LYRLKIEEQKRLREEILKQKELRRQQQAGARKKELLERLAQQQQQLY. A Phosphoserine modification is found at serine 951. A Glycyl lysine isopeptide (Lys-Gly) (interchain with G-Cter in SUMO2) cross-link involves residue lysine 960. Serine 973 and serine 991 each carry phosphoserine. Asymmetric dimethylarginine; alternate is present on arginine 1028. Omega-N-methylarginine; alternate is present on arginine 1028. The region spanning 1098-1170 is the RRM domain; that stretch reads CVVSVEGLSS…SHINVALIVE (73 aa).

Associates with the NXF1-NXT1 RNA export complex. Interacts with ALKBH5; facilitating ALKBH5 recruitment to m6A-containing transcripts. Interacts with SENP1; promoting ALKBH5 deSUMOylation and subsequent activation.

It localises to the nucleus. It is found in the cytoplasm. Functionally, RNA reader protein, which recognizes and binds specific RNAs, thereby regulating RNA metabolic processes, such as mRNA export, mRNA stability and/or translation. Binds a subset of intronless RNAs containing GC-rich elements, such as NORAD, and promotes their nuclear export by recruiting target RNAs to components of the NXF1-NXT1 RNA export machinery. Specifically recognizes and binds N6-methyladenosine (m6A)-containing mRNAs, promoting their demethylation by ALKBH5. Acts as an molecular adapter, which (1) promotes ALKBH5 recruitment to m6A-containing transcripts and (2) activates ALKBH5 demethylase activity by recruiting SENP1, leading to ALKBH5 deSUMOylation and subsequent activation. The protein is RNA-binding protein 33 of Homo sapiens (Human).